The chain runs to 398 residues: MTRFDPFFQTALDDLDRRHLKRVLSPVDRDGPVIVRRDGASLLDFSSNDYLGLSHHPALRARAIDWTERFGIGSGASRLVTGTSEQYRQVEARLARFKGTEAALLLASGWQANAAVLPALLRISAAQTGEPALVFTDRLNHASLHHGCQAAGVRQIRFAHNDLGHLEHLLAQRQAQRGLRFIVTESVFSMDGDRADVAGLRTLADRYGAFLYLDEAHATGVLGPQGRGLSAEAGGVDLAMGTFSKALGGFGAYVAGSRAVCDWLVSTCSGFIYTTALPPGVLGVIDAALDLVPTLDAERAHLAGLADRMRAGAGALGWSTGPSSTQIVPVIVGAADRALTLARALAARGMLGTAIRPPTVPAGSARIRVALSAAHDETMVDRLLSALEDAAREHGIAP.

Residues R22 and R29 each contribute to the substrate site. Position 109-110 (G109–W110) interacts with pyridoxal 5'-phosphate. Position 141 (H141) interacts with substrate. Residues S189, D214–H217, and T242–K245 contribute to the pyridoxal 5'-phosphate site. The residue at position 245 (K245) is an N6-(pyridoxal phosphate)lysine. Substrate is bound at residue T359.

Belongs to the class-II pyridoxal-phosphate-dependent aminotransferase family. BioF subfamily. As to quaternary structure, homodimer. Pyridoxal 5'-phosphate is required as a cofactor.

It catalyses the reaction 6-carboxyhexanoyl-[ACP] + L-alanine + H(+) = (8S)-8-amino-7-oxononanoate + holo-[ACP] + CO2. The protein operates within cofactor biosynthesis; biotin biosynthesis. In terms of biological role, catalyzes the decarboxylative condensation of pimeloyl-[acyl-carrier protein] and L-alanine to produce 8-amino-7-oxononanoate (AON), [acyl-carrier protein], and carbon dioxide. The sequence is that of 8-amino-7-oxononanoate synthase from Gluconacetobacter diazotrophicus (strain ATCC 49037 / DSM 5601 / CCUG 37298 / CIP 103539 / LMG 7603 / PAl5).